The sequence spans 467 residues: Acetyl-CoA decarbonylase/synthase complex subunit beta (467 aa).

The [Ni-Fe-S] cluster site is built by C193, C196, C282, and C284. The disordered stretch occupies residues 403 to 428; it reads RWAEEEEEEEEKAPEEEAPAEEPTME. Acidic residues predominate over residues 405 to 426; the sequence is AEEEEEEEEKAPEEEAPAEEPT.

It belongs to the CdhC family. In terms of assembly, monomer. The ACDS complex is made up of alpha, epsilon, beta, gamma and delta chains with a probable stoichiometry of (alpha(2)epsilon(2))(4)-beta(8)-(gamma(1)delta(1))(8). The cofactor is [Ni-Fe-S] cluster.

It catalyses the reaction Co(I)-[corrinoid Fe-S protein] + acetyl-CoA + H(+) = methyl-Co(III)-[corrinoid Fe-S protein] + CO + CoA. Its function is as follows. Part of a complex that catalyzes the reversible cleavage of acetyl-CoA, allowing autotrophic growth from CO(2). The alpha-epsilon complex generates CO from CO(2), while the beta subunit (this protein) combines the CO with CoA and a methyl group to form acetyl-CoA. The methyl group, which is incorporated into acetyl-CoA, is transferred to the beta subunit by a corrinoid iron-sulfur protein (the gamma-delta complex). This is Acetyl-CoA decarbonylase/synthase complex subunit beta from Methanopyrus kandleri (strain AV19 / DSM 6324 / JCM 9639 / NBRC 100938).